Here is a 610-residue protein sequence, read N- to C-terminus: Putative sensor histidine kinase NtrY-like (610 aa).

4 helical membrane-spanning segments follow: residues 18 to 38, 49 to 69, 92 to 112, and 292 to 312; these read IGILVAIAIIFSYFTYYTISI, KVIWFLLIDLIIFLVLGILLT, IVVAFSLAAAIPTIIVSISSA, and IIFIFIALLLLLIAISFGVIV. One can recognise an HAMP domain in the interval 314–368; it reads AKIVNPIKKLVIATDKVKSGDLTVQVPENEVDKDEIGTLYAAFNRMIKQLSRQQR. The region spanning 385-596 is the Histidine kinase domain; the sequence is KVAHEIKNPL…VIDIRFNLEE (212 aa). Position 388 is a phosphohistidine; by autocatalysis (H388).

The protein localises to the cell membrane. The catalysed reaction is ATP + protein L-histidine = ADP + protein N-phospho-L-histidine.. Member of the two-component regulatory system RBE_0470/RBE_0312. The protein is Putative sensor histidine kinase NtrY-like of Rickettsia bellii (strain RML369-C).